The primary structure comprises 262 residues: Trypsin theta (262 aa).

A signal peptide spans 1 to 19 (MHRLVVLLVCLAVGSACAG). Residues 20 to 34 (TVGVSNGDPFEREGR) constitute a propeptide, activation peptide. The region spanning 35–260 (IVGGEDTTIG…LRKWILNASE (226 aa)) is the Peptidase S1 domain. The cysteines at positions 61 and 77 are disulfide-linked. Residues histidine 76 and aspartate 121 each act as charge relay system in the active site. 2 cysteine pairs are disulfide-bonded: cysteine 186–cysteine 203 and cysteine 212–cysteine 236. Serine 216 (charge relay system) is an active-site residue.

The protein belongs to the peptidase S1 family.

It is found in the secreted. Its subcellular location is the extracellular space. It carries out the reaction Preferential cleavage: Arg-|-Xaa, Lys-|-Xaa.. The chain is Trypsin theta (thetaTry) from Drosophila melanogaster (Fruit fly).